The chain runs to 84 residues: U4-theraphotoxin-Hhn1b (84 aa).

The first 22 residues, 1-22, serve as a signal peptide directing secretion; that stretch reads MKVTLTAILTCAAVLVLHTTAA. Residues 23–47 constitute a propeptide that is removed on maturation; it reads EELEESQLMEVGMPDTELAAVDEER. 3 cysteine pairs are disulfide-bonded: C51–C65, C55–C76, and C70–C81.

It belongs to the neurotoxin 12 (Hwtx-2) family. 02 (Hwtx-2) subfamily. As to expression, expressed by the venom gland.

It is found in the secreted. In terms of biological role, postsynaptic neurotoxin. The protein is U4-theraphotoxin-Hhn1b of Cyriopagopus hainanus (Chinese bird spider).